A 166-amino-acid chain; its full sequence is Interferon gamma (166 aa).

A signal peptide spans 1–23; it reads MNYTSYILAFQLCVILCSSGYYC. At Gln24 the chain carries Pyrrolidone carboxylic acid. N-linked (GlcNAc...) asparagine glycosylation is found at Asn39 and Asn106.

Belongs to the type II (or gamma) interferon family. In terms of assembly, homodimer. Interacts with IFNGR1 (via extracellular domain); this interaction promotes IFNGR1 dimerization. Released primarily from activated T lymphocytes.

It localises to the secreted. Functionally, type II interferon produced by immune cells such as T-cells and NK cells that plays crucial roles in antimicrobial, antiviral, and antitumor responses by activating effector immune cells and enhancing antigen presentation. Primarily signals through the JAK-STAT pathway after interaction with its receptor IFNGR1 to affect gene regulation. Upon IFNG binding, IFNGR1 intracellular domain opens out to allow association of downstream signaling components JAK2, JAK1 and STAT1, leading to STAT1 activation, nuclear translocation and transcription of IFNG-regulated genes. Many of the induced genes are transcription factors such as IRF1 that are able to further drive regulation of a next wave of transcription. Plays a role in class I antigen presentation pathway by inducing a replacement of catalytic proteasome subunits with immunoproteasome subunits. In turn, increases the quantity, quality, and repertoire of peptides for class I MHC loading. Increases the efficiency of peptide generation also by inducing the expression of activator PA28 that associates with the proteasome and alters its proteolytic cleavage preference. Up-regulates as well MHC II complexes on the cell surface by promoting expression of several key molecules such as cathepsins B/CTSB, H/CTSH, and L/CTSL. Participates in the regulation of hematopoietic stem cells during development and under homeostatic conditions by affecting their development, quiescence, and differentiation. The chain is Interferon gamma (IFNG) from Ailuropoda melanoleuca (Giant panda).